The primary structure comprises 363 residues: Ribosomal RNA small subunit methyltransferase H (363 aa).

S-adenosyl-L-methionine is bound by residues Gly-55–His-57, Asp-75, Asp-122, and Gln-129.

Belongs to the methyltransferase superfamily. RsmH family.

The protein resides in the cytoplasm. The catalysed reaction is cytidine(1402) in 16S rRNA + S-adenosyl-L-methionine = N(4)-methylcytidine(1402) in 16S rRNA + S-adenosyl-L-homocysteine + H(+). Functionally, specifically methylates the N4 position of cytidine in position 1402 (C1402) of 16S rRNA. The polypeptide is Ribosomal RNA small subunit methyltransferase H (Bordetella petrii (strain ATCC BAA-461 / DSM 12804 / CCUG 43448)).